The chain runs to 199 residues: Imidazoleglycerol-phosphate dehydratase (199 aa).

The protein belongs to the imidazoleglycerol-phosphate dehydratase family.

The protein resides in the cytoplasm. The enzyme catalyses D-erythro-1-(imidazol-4-yl)glycerol 3-phosphate = 3-(imidazol-4-yl)-2-oxopropyl phosphate + H2O. It functions in the pathway amino-acid biosynthesis; L-histidine biosynthesis; L-histidine from 5-phospho-alpha-D-ribose 1-diphosphate: step 6/9. The chain is Imidazoleglycerol-phosphate dehydratase from Mesorhizobium japonicum (strain LMG 29417 / CECT 9101 / MAFF 303099) (Mesorhizobium loti (strain MAFF 303099)).